The sequence spans 156 residues: Ribosomal RNA large subunit methyltransferase H (156 aa).

S-adenosyl-L-methionine contacts are provided by residues leucine 73, glycine 104, and 123-128 (LSALTL).

Belongs to the RNA methyltransferase RlmH family. As to quaternary structure, homodimer.

Its subcellular location is the cytoplasm. The enzyme catalyses pseudouridine(1915) in 23S rRNA + S-adenosyl-L-methionine = N(3)-methylpseudouridine(1915) in 23S rRNA + S-adenosyl-L-homocysteine + H(+). In terms of biological role, specifically methylates the pseudouridine at position 1915 (m3Psi1915) in 23S rRNA. This Erwinia tasmaniensis (strain DSM 17950 / CFBP 7177 / CIP 109463 / NCPPB 4357 / Et1/99) protein is Ribosomal RNA large subunit methyltransferase H.